Reading from the N-terminus, the 169-residue chain is Transcription antitermination protein NusB (169 aa).

Residues 150–169 are disordered; sequence AAATSRRTETAGGESNDAGS.

It belongs to the NusB family.

Involved in transcription antitermination. Required for transcription of ribosomal RNA (rRNA) genes. Binds specifically to the boxA antiterminator sequence of the ribosomal RNA (rrn) operons. The protein is Transcription antitermination protein NusB of Rhodococcus jostii (strain RHA1).